The following is a 263-amino-acid chain: Ribonuclease HII (263 aa).

The RNase H type-2 domain occupies 71–262 (QAIAGIDEVG…VKSMCCDSTN (192 aa)). Residues Asp77, Glu78, and Asp172 each contribute to the a divalent metal cation site.

It belongs to the RNase HII family. The cofactor is Mn(2+). It depends on Mg(2+) as a cofactor.

The protein resides in the cytoplasm. It carries out the reaction Endonucleolytic cleavage to 5'-phosphomonoester.. In terms of biological role, endonuclease that specifically degrades the RNA of RNA-DNA hybrids. This is Ribonuclease HII from Streptococcus pyogenes serotype M3 (strain ATCC BAA-595 / MGAS315).